A 290-amino-acid chain; its full sequence is Alpha-mannosidase (290 aa).

Aspartate 17 serves as the catalytic Nucleophile. The N-linked (GlcNAc...) asparagine glycan is linked to asparagine 64.

This sequence belongs to the glycosyl hydrolase 38 family. As to quaternary structure, dimer. Requires Zn(2+) as cofactor.

The catalysed reaction is Hydrolysis of terminal, non-reducing alpha-D-mannose residues in alpha-D-mannosides.. Inhibited by swainsonine but not by 1-desoxymannojirimycin. Its function is as follows. Liberates mannose from p-nitrophenyl-alpha-D-mannoside. This chain is Alpha-mannosidase, found in Lablab purpureus (Hyacinth bean).